The chain runs to 84 residues: Small ribosomal subunit protein uS17 (84 aa).

It belongs to the universal ribosomal protein uS17 family. Part of the 30S ribosomal subunit.

One of the primary rRNA binding proteins, it binds specifically to the 5'-end of 16S ribosomal RNA. The protein is Small ribosomal subunit protein uS17 of Clostridium perfringens (strain ATCC 13124 / DSM 756 / JCM 1290 / NCIMB 6125 / NCTC 8237 / Type A).